We begin with the raw amino-acid sequence, 135 residues long: Large ribosomal subunit protein bL17 (135 aa).

The protein belongs to the bacterial ribosomal protein bL17 family. Part of the 50S ribosomal subunit. Contacts protein L32.

This Rhodopseudomonas palustris (strain BisB18) protein is Large ribosomal subunit protein bL17.